Here is a 412-residue protein sequence, read N- to C-terminus: Argininosuccinate synthase (412 aa).

ATP is bound by residues Ala10–Ser18 and Ala36. Tyr87 and Ser92 together coordinate L-citrulline. At Tyr87 the chain carries Phosphotyrosine. Lys112 bears the N6-acetyllysine mark. Phosphotyrosine is present on Tyr113. An ATP-binding site is contributed by Ser115 to Asn123. Thr119, Asn123, and Asp124 together coordinate L-aspartate. Asn123 lines the L-citrulline pocket. Arg127 is a binding site for L-citrulline. N6-acetyllysine; by CLOCK is present on residues Lys165 and Lys176. Phosphoserine occurs at positions 177 and 180. Residues Ser180 and Ser189 each contribute to the L-citrulline site. Thr219 bears the Phosphothreonine mark. L-citrulline-binding residues include Glu270 and Tyr282.

This sequence belongs to the argininosuccinate synthase family. Type 1 subfamily. As to quaternary structure, homotetramer. Interacts with NMRAL1. Interacts with CLOCK; in a circadian manner. Forms tissue-specific complexes with ASL, SLC7A1, HSP90AA1 and nitric oxide synthase NOS1, NOS2 or NOS3; the complex regulates cell-autonomous L-arginine synthesis and citrulline recycling while channeling extracellular L-arginine to nitric oxide synthesis pathway. In terms of processing, acetylated by CLOCK in a circadian manner which negatively regulates its enzyme activity. Deacetylated by histone deacetylases.

It localises to the cytoplasm. It is found in the cytosol. The enzyme catalyses L-citrulline + L-aspartate + ATP = 2-(N(omega)-L-arginino)succinate + AMP + diphosphate + H(+). It participates in amino-acid biosynthesis; L-arginine biosynthesis; L-arginine from L-ornithine and carbamoyl phosphate: step 2/3. The protein operates within nitrogen metabolism; urea cycle; (N(omega)-L-arginino)succinate from L-aspartate and L-citrulline: step 1/1. Functionally, one of the enzymes of the urea cycle, the metabolic pathway transforming neurotoxic amonia produced by protein catabolism into inocuous urea in the liver of ureotelic animals. Catalyzes the formation of arginosuccinate from aspartate, citrulline and ATP and together with ASL it is responsible for the biosynthesis of arginine in most body tissues. Indirectly, may be involved in the control of blood pressure. This is Argininosuccinate synthase from Rattus norvegicus (Rat).